A 326-amino-acid chain; its full sequence is DNA-directed RNA polymerase subunit alpha (326 aa).

Residues 1 to 230 (MLKIEKQAKA…LHLDPFLEIG (230 aa)) are alpha N-terminal domain (alpha-NTD). Residues 249–326 (DIQVIDDKSH…YDLEKNGSPE (78 aa)) form an alpha C-terminal domain (alpha-CTD) region.

The protein belongs to the RNA polymerase alpha chain family. Homodimer. The RNAP catalytic core consists of 2 alpha, 1 beta, 1 beta' and 1 omega subunit. When a sigma factor is associated with the core the holoenzyme is formed, which can initiate transcription.

It carries out the reaction RNA(n) + a ribonucleoside 5'-triphosphate = RNA(n+1) + diphosphate. Functionally, DNA-dependent RNA polymerase catalyzes the transcription of DNA into RNA using the four ribonucleoside triphosphates as substrates. This is DNA-directed RNA polymerase subunit alpha from Fusobacterium nucleatum subsp. nucleatum (strain ATCC 25586 / DSM 15643 / BCRC 10681 / CIP 101130 / JCM 8532 / KCTC 2640 / LMG 13131 / VPI 4355).